The following is a 411-amino-acid chain: Arginine deiminase (411 aa).

The active-site Amidino-cysteine intermediate is the Cys-401.

It belongs to the arginine deiminase family.

Its subcellular location is the cytoplasm. It carries out the reaction L-arginine + H2O = L-citrulline + NH4(+). It functions in the pathway amino-acid degradation; L-arginine degradation via ADI pathway; carbamoyl phosphate from L-arginine: step 1/2. The sequence is that of Arginine deiminase from Streptococcus equi subsp. equi (strain 4047).